We begin with the raw amino-acid sequence, 177 residues long: Protein VERNALIZATION 3 (177 aa).

Belongs to the phosphatidylethanolamine-binding protein family. Expressed in leaves but not in shoot apex.

Involved in the regulation of vernalization and of flowering time; this process in essential for flowering in cv. Bd29-1 but seems do not occur in cv. Bd21. The chain is Protein VERNALIZATION 3 from Brachypodium distachyon (Purple false brome).